The primary structure comprises 119 residues: Ribonuclease P protein component (119 aa).

The protein belongs to the RnpA family. Consists of a catalytic RNA component (M1 or rnpB) and a protein subunit.

The catalysed reaction is Endonucleolytic cleavage of RNA, removing 5'-extranucleotides from tRNA precursor.. In terms of biological role, RNaseP catalyzes the removal of the 5'-leader sequence from pre-tRNA to produce the mature 5'-terminus. It can also cleave other RNA substrates such as 4.5S RNA. The protein component plays an auxiliary but essential role in vivo by binding to the 5'-leader sequence and broadening the substrate specificity of the ribozyme. The protein is Ribonuclease P protein component of Citrobacter koseri (strain ATCC BAA-895 / CDC 4225-83 / SGSC4696).